Consider the following 92-residue polypeptide: Evasin P675 (92 aa).

The first 24 residues, 1-24 (MEVKTFAFLQIAVIIALGLHLAPA), serve as a signal peptide directing secretion. Cystine bridges form between Cys-44/Cys-63, Cys-48/Cys-65, and Cys-59/Cys-76. N-linked (GlcNAc...) asparagine glycosylation occurs at Asn-47. N-linked (GlcNAc...) asparagine glycosylation is present at Asn-70.

It localises to the secreted. Its function is as follows. Salivary chemokine-binding protein which binds to host chemokines CXCL1, CXCL2, CXCL3, CXCL4, CXCL5, CXCL6, CXCL10, CXCL11 and CXCL13. The protein is Evasin P675 of Ixodes ricinus (Common tick).